The chain runs to 98 residues: NADH-ubiquinone oxidoreductase chain 4L (98 aa).

3 helical membrane-spanning segments follow: residues 1–21, 29–49, and 61–81; these read MSLV…GLLM, SLLC…IMVL, and IILL…LVMV.

This sequence belongs to the complex I subunit 4L family. In terms of assembly, core subunit of respiratory chain NADH dehydrogenase (Complex I) which is composed of 45 different subunits.

It is found in the mitochondrion inner membrane. The enzyme catalyses a ubiquinone + NADH + 5 H(+)(in) = a ubiquinol + NAD(+) + 4 H(+)(out). Its function is as follows. Core subunit of the mitochondrial membrane respiratory chain NADH dehydrogenase (Complex I) which catalyzes electron transfer from NADH through the respiratory chain, using ubiquinone as an electron acceptor. Part of the enzyme membrane arm which is embedded in the lipid bilayer and involved in proton translocation. The polypeptide is NADH-ubiquinone oxidoreductase chain 4L (MT-ND4L) (Pseudosoriculus fumidus (Taiwanese brown-toothed shrew)).